Consider the following 1149-residue polypeptide: Protogenin A (1149 aa).

The signal sequence occupies residues 1-23 (MASFKRDLYLFLAVFLSISGVWS). The Extracellular portion of the chain corresponds to 24–932 (FSELFFIKEP…GFYHLDQRSM (909 aa)). 4 Ig-like domains span residues 27–117 (LFFI…ARLT), 122–209 (STFT…ATLT), 222–309 (PRII…ANIT), and 314–399 (PSLV…RLIV). Cystine bridges form between C48–C100 and C143–C192. An N-linked (GlcNAc...) asparagine glycan is attached at N78. A glycan (N-linked (GlcNAc...) asparagine) is linked at N230. A disulfide bond links C243 and C291. N-linked (GlcNAc...) asparagine glycosylation is found at N300 and N307. C335 and C382 form a disulfide bridge. 5 Fibronectin type-III domains span residues 408 to 502 (APRN…TLED), 504 to 600 (PLRA…TPKA), 605 to 704 (VPLA…VRDR), 711 to 804 (PPHH…TLPE), and 809 to 905 (APVG…IHTD). Residues N460 and N475 are each glycosylated (N-linked (GlcNAc...) asparagine). Residue N617 is glycosylated (N-linked (GlcNAc...) asparagine). Positions 646 to 666 (GQSEAAQAQIPPHHRQHTIGG) are disordered. Residues N720, N741, and N753 are each glycosylated (N-linked (GlcNAc...) asparagine). The helical transmembrane segment at 933 to 953 (AGIAVGVCIALTCIIICILIL) threads the bilayer. The Cytoplasmic portion of the chain corresponds to 954 to 1149 (ACRSKTRKSC…EQEMTDLHPV (196 aa)). Residues 1060 to 1149 (YTETSPENPP…EQEMTDLHPV (90 aa)) are disordered. A compositionally biased stretch (polar residues) spans 1061–1073 (TETSPENPPTTLQ). Over residues 1084 to 1106 (EGSHSSEGSHETSDSGRYSHDDT) the composition is skewed to basic and acidic residues.

Belongs to the immunoglobulin superfamily. DCC family. Expression begins in the posterior region of the embryo and this posterior restriction persists at the 4 s stage. At early somite stages, expressed along the neural tube with lower levels in the lateral and paraxial mesoderm. Expression decreases caudally and rostrally becomes restricted to the ventral part of the brain. Widespread in the spinal cord at 30 hours post-fertilization (hpf) and is also expressed in the lens from this time. At 40 hpf, expression is restricted to the lens.

The protein localises to the membrane. Functionally, may play a role in anteroposterior axis elongation. The protein is Protogenin A of Danio rerio (Zebrafish).